The sequence spans 442 residues: tRNA modification GTPase MnmE (442 aa).

(6S)-5-formyl-5,6,7,8-tetrahydrofolate is bound by residues Arg27, Glu84, and Lys124. One can recognise a TrmE-type G domain in the interval 221–366 (GLHVVIVGAP…LLDALQAFAE (146 aa)). Residues 231-236 (NAGKSS), 250-256 (SKEAGTT), and 275-278 (DTAG) each bind GTP. Mg(2+)-binding residues include Ser235 and Thr256. (6S)-5-formyl-5,6,7,8-tetrahydrofolate is bound at residue Lys442.

This sequence belongs to the TRAFAC class TrmE-Era-EngA-EngB-Septin-like GTPase superfamily. TrmE GTPase family. As to quaternary structure, homodimer. Heterotetramer of two MnmE and two MnmG subunits. Requires K(+) as cofactor.

The protein localises to the cytoplasm. Functionally, exhibits a very high intrinsic GTPase hydrolysis rate. Involved in the addition of a carboxymethylaminomethyl (cmnm) group at the wobble position (U34) of certain tRNAs, forming tRNA-cmnm(5)s(2)U34. In Brucella canis (strain ATCC 23365 / NCTC 10854 / RM-666), this protein is tRNA modification GTPase MnmE.